Reading from the N-terminus, the 79-residue chain is Neurotoxin ShK-like1 (79 aa).

The first 25 residues, M1 to A25, serve as a signal peptide directing secretion. The propeptide occupies L26 to R35. The region spanning C39–C78 is the ShKT domain. 3 disulfide bridges follow: C39–C78, C47–C71, and C56–C75.

Expressed in nematocytes (in planulae and primary polyps). Is localized predominantly in the body column nematocytes and not in the tentacles (in primary polyps).

It is found in the nematocyst. It localises to the secreted. In terms of biological role, neurotoxin. In vivo, induces contraction paralysis followed by death (within 2 hours) on zebrafish larvae. Also induces body contraction in Nematostella 11-dpf polyps. This chain is Neurotoxin ShK-like1, found in Nematostella vectensis (Starlet sea anemone).